Reading from the N-terminus, the 291-residue chain is GTP-binding protein RHO4 (291 aa).

Residues 14-31 (GNESNIVSQGSPSSSNLP) show a composition bias toward polar residues. Residues 14–45 (GNESNIVSQGSPSSSNLPESPGTLDEKNLPRL) form a disordered region. 79-86 (GDGAVGKT) lines the GTP pocket. An Effector region motif is present at residues 101 to 109 (YIPTIFENY). Residues 127–131 (DTAGQ) and 185–188 (LKSD) contribute to the GTP site. Residues 250–273 (THTIKNPFKRNTTRSDIDSSTGDT) are disordered. Serine 264, serine 268, and serine 276 each carry phosphoserine. Cysteine 288 carries the post-translational modification Cysteine methyl ester. A lipid anchor (S-farnesyl cysteine) is attached at cysteine 288. Residues 289–291 (IIM) constitute a propeptide, removed in mature form.

The protein belongs to the small GTPase superfamily. Rho family. As to quaternary structure, interacts with BEM4.

Its subcellular location is the cell membrane. The enzyme catalyses GTP + H2O = GDP + phosphate + H(+). Its function is as follows. Plays an important role in cell growth. Required to keep the uninucleated state. May be involved in the organization of the cytoskeleton which affects microtubule functions. Most likely RHO3 and RHO4 of S.cerevisiae regulate partially overlapping but different pathways. In Saccharomyces cerevisiae (strain ATCC 204508 / S288c) (Baker's yeast), this protein is GTP-binding protein RHO4 (RHO4).